A 384-amino-acid polypeptide reads, in one-letter code: Dehydrogenase ALT3 (384 aa).

Belongs to the iron-containing alcohol dehydrogenase family. It depends on Fe cation as a cofactor.

The protein operates within mycotoxin biosynthesis. Its function is as follows. Dehydrogenase; part of the gene cluster that mediates the biosynthesis of the host-selective toxins (HSTs) AAL-toxins, sphinganine-analog mycotoxins responsible for Alternaria stem canker on tomato by the tomato pathotype. The biosynthesis starts with the polyketide synthase ALT1-catalyzed C-16 carbon chain assembly from one starter acetyl-CoA unit with malonyl-CoA extender units. ALT1 also selectively transfers methyl groups at the first and the third cycle of chain elongation for AAL toxin. The C-16 polyketide chain is released from the enzyme by a nucleophilic attack of a carbanion, which is derived from R-carbon of glycin by decarboxylation, on the carbonyl carbon of polyketide acyl chain. This step is probably catalyzed by a pyridoxal 5'-phosphate-dependent aminoacyl transferase ALT4. The respective functions of the other enzymes encoded by the cluster have still to be elucidated. The sphingosine N-acyltransferase-like protein ALT7 seems not to act as a resistance/self-tolerance factor against the toxin in the toxin biosynthetic gene cluster, contrary to what is expected. The chain is Dehydrogenase ALT3 from Alternaria alternata (Alternaria rot fungus).